The following is a 311-amino-acid chain: tRNA dimethylallyltransferase (311 aa).

Residue 9–16 (GPTAVGKT) coordinates ATP. Substrate is bound at residue 11-16 (TAVGKT). The interaction with substrate tRNA stretch occupies residues 34–37 (DSMQ).

Belongs to the IPP transferase family. In terms of assembly, monomer. Mg(2+) serves as cofactor.

The catalysed reaction is adenosine(37) in tRNA + dimethylallyl diphosphate = N(6)-dimethylallyladenosine(37) in tRNA + diphosphate. Catalyzes the transfer of a dimethylallyl group onto the adenine at position 37 in tRNAs that read codons beginning with uridine, leading to the formation of N6-(dimethylallyl)adenosine (i(6)A). In Clostridium botulinum (strain Okra / Type B1), this protein is tRNA dimethylallyltransferase.